The sequence spans 287 residues: Pyridoxal kinase PdxY (287 aa).

Substrate contacts are provided by residues Ser9 and 44-45; that span reads TQ. ATP contacts are provided by residues Asp111, Ala143, Glu148, Lys181, and 208–211; that span reads RPLV. Asp223 lines the substrate pocket.

Belongs to the pyridoxine kinase family. PdxY subfamily. As to quaternary structure, homodimer. Mg(2+) is required as a cofactor.

It catalyses the reaction pyridoxal + ATP = pyridoxal 5'-phosphate + ADP + H(+). It functions in the pathway cofactor metabolism; pyridoxal 5'-phosphate salvage; pyridoxal 5'-phosphate from pyridoxal: step 1/1. Its function is as follows. Pyridoxal kinase involved in the salvage pathway of pyridoxal 5'-phosphate (PLP). Catalyzes the phosphorylation of pyridoxal to PLP. The polypeptide is Pyridoxal kinase PdxY (Photorhabdus laumondii subsp. laumondii (strain DSM 15139 / CIP 105565 / TT01) (Photorhabdus luminescens subsp. laumondii)).